A 107-amino-acid chain; its full sequence is Magnetosome protein MmsF (107 aa).

Topologically, residues 1 to 13 are cytoplasmic; sequence MTEAILRSTLGAR. A helical membrane pass occupies residues 14-34; it reads TTVMAALSYLSVLCFVPLLVD. At 35 to 46 the chain is on the lumenal side; the sequence is RDDEFVYFHAKQ. The chain crosses the membrane as a helical span at residues 47–67; it reads GLVIWMWGVLALFALHVPVLG. Residues 68–69 are Cytoplasmic-facing; the sequence is KW. The chain crosses the membrane as a helical span at residues 70–90; the sequence is IFGFSSMGVLVFSLLGLVSVV. Over 91-107 the chain is Lumenal; the sequence is FQRAWKLPLISWVAHRI.

The protein belongs to the magnetosome MamF/MmsF protein family. In terms of assembly, may oligomerize.

Its subcellular location is the magnetosome membrane. With respect to regulation, its function may be negatively regulated by one of the MamGFDC proteins. Plays a major role in synthesis of cubooctahedral magnetite crystals by controlling crystal growth and morphology after nucleation. Has a partially redundant function with MamF. When overexpressed in E.coli the soluble protein self assembles into shells of about 36 nm. This protein mediates the formation of magnetite nanoparticles from a solution of Fe(2+) and Fe(3+) sulfate; the crystals are larger and lack alternative iron oxide/oxyhydroxide species seen in the protein's absence. The chain is Magnetosome protein MmsF from Paramagnetospirillum magneticum (strain ATCC 700264 / AMB-1) (Magnetospirillum magneticum).